The primary structure comprises 389 residues: MHSEREESWRAELSALRAHDLWRELQVLQPAPERGPPTFVGTRGEPLLSFASNDYLGLSAESALRDAAIAEIQQSGVGAGAAPLLGGERPAHAVLANALARWLGVEAALLFGSGYLANLGVISTLVGRGDRVYADRLNHASLVDGVRLSGARLHRYRHGDMTHLAQWLERGGRGQAWIITDGVFSMDGDIAPLPELATLAQQYGAGIILDEAHAFGVLGTEGQGTAAHWNMDIHGVDVIMGTLGKAFGVYGAFVAGSQDVVDLLRNRARSFIYHTALPSALAAAALVALDLLRHGDARRERLTQHRQHLRAQVPDAPWLASETPIQGLLLGDARRALTVSAQLRRAGLYCPAVRPPTVPADSARLRITLSAAHSHDDIELLATTLREVL.

Arg23 contributes to the substrate binding site. 114-115 (GY) is a pyridoxal 5'-phosphate binding site. His139 lines the substrate pocket. Positions 185, 213, and 242 each coordinate pyridoxal 5'-phosphate. Lys245 carries the post-translational modification N6-(pyridoxal phosphate)lysine. Thr357 contacts substrate.

Belongs to the class-II pyridoxal-phosphate-dependent aminotransferase family. BioF subfamily. As to quaternary structure, homodimer. Pyridoxal 5'-phosphate serves as cofactor.

The catalysed reaction is 6-carboxyhexanoyl-[ACP] + L-alanine + H(+) = (8S)-8-amino-7-oxononanoate + holo-[ACP] + CO2. The protein operates within cofactor biosynthesis; biotin biosynthesis. Its function is as follows. Catalyzes the decarboxylative condensation of pimeloyl-[acyl-carrier protein] and L-alanine to produce 8-amino-7-oxononanoate (AON), [acyl-carrier protein], and carbon dioxide. The chain is 8-amino-7-oxononanoate synthase from Acidithiobacillus ferrooxidans (strain ATCC 23270 / DSM 14882 / CIP 104768 / NCIMB 8455) (Ferrobacillus ferrooxidans (strain ATCC 23270)).